The primary structure comprises 713 residues: Pro-neuregulin-3, membrane-bound isoform (713 aa).

The Extracellular segment spans residues 1-362; the sequence is MSEGAAGASP…MESEDVYQRQ (362 aa). Disordered regions lie at residues 28–48, 119–220, and 251–282; these read AAAAAAAGGGPDGGGEGAAEP, SSFP…STQA, and AAASSSSPSSTSSTTTTPETSTSPKFHTTTYS. The span at 34-44 shows a compositional bias: gly residues; sequence AGGGPDGGGEG. The segment covering 127 to 148 has biased composition (low complexity); the sequence is TTTTTTSTTSPATPSAGGAASS. Residues 149–163 are compositionally biased toward polar residues; the sequence is RTPNRISTRLTTITR. Composition is skewed to low complexity over residues 195 to 207 and 254 to 274; these read STTAPFFSSSTPG and SSSSPSSTSSTTTTPETSTSP. Residues 288-331 enclose the EGF-like domain; sequence HFKPCRDKDLAYCLNDGECFVIETLTGSHKHCRCKEGYQGVRCD. Cystine bridges form between C292-C306, C300-C319, and C321-C330. The helical transmembrane segment at 363 to 383 threads the bilayer; the sequence is VLSISCIIFGIVIVGMFCAAF. Topologically, residues 384 to 713 are cytoplasmic; that stretch reads YFKSKKQAKQ…EIQRDSVLTK (330 aa). The interval 449-496 is disordered; sequence SAPQSFPEVTSPDRGSQPIKHHSPGQRSGMLHRNTFRRAPPSPRSRLG.

The protein belongs to the neuregulin family. In terms of assembly, interacts with ERBB4. In terms of processing, proteolytic cleavage close to the plasma membrane on the external face leads to the release of the soluble growth factor form. Post-translationally, extensive glycosylation precedes the proteolytic cleavage. Expressed in sympathetic, motor, and sensory neurons.

It localises to the cell membrane. The protein resides in the secreted. In terms of biological role, direct ligand for the ERBB4 tyrosine kinase receptor. Binding results in ligand-stimulated tyrosine phosphorylation and activation of the receptor. Does not bind to the EGF receptor, ERBB2 or ERBB3 receptors. The protein is Pro-neuregulin-3, membrane-bound isoform (Nrg3) of Mus musculus (Mouse).